The primary structure comprises 338 residues: NADPH dehydrogenase (338 aa).

23-26 (SPMC) lines the FMN pocket. Position 28 (Tyr28) interacts with substrate. The FMN site is built by Ala60 and Gln102. 163–166 (HGAH) is a substrate binding site. Residues Arg214 and 306-307 (AR) each bind FMN.

This sequence belongs to the NADH:flavin oxidoreductase/NADH oxidase family. NamA subfamily. Homotetramer. FMN serves as cofactor.

The enzyme catalyses A + NADPH + H(+) = AH2 + NADP(+). Functionally, catalyzes the reduction of the double bond of an array of alpha,beta-unsaturated aldehydes and ketones. It also reduces the nitro group of nitroester and nitroaromatic compounds. It could have a role in detoxification processes. In Halalkalibacterium halodurans (strain ATCC BAA-125 / DSM 18197 / FERM 7344 / JCM 9153 / C-125) (Bacillus halodurans), this protein is NADPH dehydrogenase.